The chain runs to 192 residues: Elongation factor P (192 aa).

The protein belongs to the elongation factor P family.

It localises to the cytoplasm. Its pathway is protein biosynthesis; polypeptide chain elongation. Functionally, involved in peptide bond synthesis. Stimulates efficient translation and peptide-bond synthesis on native or reconstituted 70S ribosomes in vitro. Probably functions indirectly by altering the affinity of the ribosome for aminoacyl-tRNA, thus increasing their reactivity as acceptors for peptidyl transferase. The protein is Elongation factor P of Borrelia turicatae (strain 91E135).